Reading from the N-terminus, the 608-residue chain is MQWLSVCSLLVLLSVLSRSQAQNQICTIFTEAKEDGFKSLILVGLAQNLPDSTLGDLVPLIAEALAMGVKCCSDTPPEDCERDVADLFQSAVCSSETLVEKNDLKMCCEKTAAERTHCFVDHKAKIPRDLSLKAELPAADQCEDFKKDHKAFVGRFIFKFSKSNPMLPPHVVLAIAKGYGEVLTTCCGEAEAQTCFDTKKATFQHAIAKRVAELKSLCIVHKKYGDRVVKAKKLVQYSQKMPQASFQEMAGMVDKIVATVAPCCSGDMVTCMKERKTLVDEVCADESVLSRAAGLSACCKEDAVHRGSCVEAMKPDPKPDGLSEHYDVHADIAAVCQTFTKTPDVAMGKLVYEISVRHPESSQQVILRFAKEAEQALLQCCDMEDHAECVKTALAGSDIDKKITDETDYYKKMCAAEAAVSDDNFEKSMMVYYTRIMPQASFDQLHMVSETVHDVLHACCKDEPGHFVLPCAEEKLTDAIDATCDDYDPSSINPHIAHCCNQSYSMRRHCILAIQPDTEFTPPELDASSFHMGPELCTKDSKDLLLSGKKLLYGVVRHKTTITEDHLKTISTKYHTMKDKCCAAEDQAACFTEEAPKLVSESAELVKV.

The signal sequence occupies residues 1–14 (MQWLSVCSLLVLLS). A propeptide spanning residues 15 to 18 (VLSR) is cleaved from the precursor. Albumin domains are found at residues 19–205 (SQAQ…TFQH), 206–398 (AIAK…AGSD), and 402–600 (KITD…KLVS). 18 cysteine pairs are disulfide-bonded: Cys-26/Cys-72, Cys-71/Cys-80, Cys-93/Cys-108, Cys-107/Cys-118, Cys-142/Cys-187, Cys-186/Cys-195, Cys-218/Cys-264, Cys-263/Cys-271, Cys-283/Cys-299, Cys-298/Cys-309, Cys-336/Cys-381, Cys-380/Cys-389, Cys-414/Cys-460, Cys-459/Cys-471, Cys-484/Cys-500, Cys-499/Cys-510, Cys-537/Cys-582, and Cys-581/Cys-590. Residue Asn-501 is glycosylated (N-linked (GlcNAc...) asparagine).

Belongs to the ALB/AFP/VDB family. Plasma.

Its subcellular location is the secreted. In terms of biological role, binds water, Ca(2+), Na(+), K(+), fatty acids, hormones, bilirubin and drugs. Its main function is the regulation of the colloidal osmotic pressure of blood. This Salmo salar (Atlantic salmon) protein is Albumin 2 (alb2).